A 288-amino-acid chain; its full sequence is Undecaprenyl-diphosphatase (288 aa).

The next 8 helical transmembrane spans lie at 25 to 45 (GITE…NEFL), 53 to 73 (FIDM…MVIY), 93 to 113 (WKLW…GLLL), 121 to 141 (LSNF…FIWI), 171 to 191 (VLSI…GIIV), 196 to 216 (SVAA…YSGL), 231 to 251 (GQAA…LFVI), and 263 to 283 (FTVF…YGAV).

This sequence belongs to the UppP family.

It is found in the cell membrane. The catalysed reaction is di-trans,octa-cis-undecaprenyl diphosphate + H2O = di-trans,octa-cis-undecaprenyl phosphate + phosphate + H(+). Catalyzes the dephosphorylation of undecaprenyl diphosphate (UPP). Confers resistance to bacitracin. This Streptococcus thermophilus (strain CNRZ 1066) protein is Undecaprenyl-diphosphatase.